Consider the following 103-residue polypeptide: Small ribosomal subunit protein uS10 (103 aa).

The protein belongs to the universal ribosomal protein uS10 family. In terms of assembly, part of the 30S ribosomal subunit.

In terms of biological role, involved in the binding of tRNA to the ribosomes. In Ralstonia pickettii (strain 12J), this protein is Small ribosomal subunit protein uS10.